The chain runs to 81 residues: Acyl carrier protein (81 aa).

In terms of domain architecture, Carrier spans 2–80 (ASEQEILSGL…DAVAYISQAQ (79 aa)). Residue Ser-40 is modified to O-(pantetheine 4'-phosphoryl)serine.

This sequence belongs to the acyl carrier protein (ACP) family. In terms of processing, 4'-phosphopantetheine is transferred from CoA to a specific serine of apo-ACP by AcpS. This modification is essential for activity because fatty acids are bound in thioester linkage to the sulfhydryl of the prosthetic group.

The protein localises to the cytoplasm. It functions in the pathway lipid metabolism; fatty acid biosynthesis. Functionally, carrier of the growing fatty acid chain in fatty acid biosynthesis. The polypeptide is Acyl carrier protein (Kineococcus radiotolerans (strain ATCC BAA-149 / DSM 14245 / SRS30216)).